The sequence spans 371 residues: Cytochrome b (371 aa).

The next 4 helical transmembrane spans lie at 25 to 45, 69 to 90, 105 to 125, and 170 to 190; these read FGSM…FLAI, WIMQ…YIHI, WLTG…GYVL, and FFAL…IHII. Residues His75 and His89 each contribute to the heme b site. Residues His174 and His188 each contribute to the heme b site. His193 serves as a coordination point for a ubiquinone. The next 4 helical transmembrane spans lie at 218-238, 280-300, 312-332, and 339-358; these read YKDL…LSFM, LGGA…PFTH, LAQT…WAAT, and FLLI…IMNP.

The protein belongs to the cytochrome b family. The cytochrome bc1 complex contains 3 respiratory subunits (MT-CYB, CYC1 and UQCRFS1), 2 core proteins (UQCRC1 and UQCRC2) and probably 6 low-molecular weight proteins. It depends on heme b as a cofactor.

The protein resides in the mitochondrion inner membrane. Its function is as follows. Component of the ubiquinol-cytochrome c reductase complex (complex III or cytochrome b-c1 complex) that is part of the mitochondrial respiratory chain. The b-c1 complex mediates electron transfer from ubiquinol to cytochrome c. Contributes to the generation of a proton gradient across the mitochondrial membrane that is then used for ATP synthesis. This is Cytochrome b (MT-CYB) from Laticauda colubrina (Yellow-lipped sea krait).